Here is a 95-residue protein sequence, read N- to C-terminus: Small ribosomal subunit protein bS18 (95 aa).

It belongs to the bacterial ribosomal protein bS18 family. In terms of assembly, part of the 30S ribosomal subunit. Forms a tight heterodimer with protein bS6.

Functionally, binds as a heterodimer with protein bS6 to the central domain of the 16S rRNA, where it helps stabilize the platform of the 30S subunit. This is Small ribosomal subunit protein bS18 from Rickettsia rickettsii (strain Sheila Smith).